We begin with the raw amino-acid sequence, 150 residues long: MKDEVALLASVTLLGVLLQAYFSLQVISARRAFRVSPPLTTGPPEFERIYRAQVNCSEYFPLFLAMLWVAGIFFHEGAAALCGLVYLFARLRYFQGYARSAQQRLAPLYASARALWLLVALAALGLLAHFLPAELRAALLGQLRKLLLRS.

Topologically, residues 1 to 6 (MKDEVA) are cytoplasmic. A helical transmembrane segment spans residues 7 to 27 (LLASVTLLGVLLQAYFSLQVI). The Lumenal segment spans residues 28 to 48 (SARRAFRVSPPLTTGPPEFER). Arginine 30 provides a ligand contact to glutathione. Residue arginine 31 is the Proton donor of the active site. Phosphoserine is present on serine 36. A helical membrane pass occupies residues 49 to 69 (IYRAQVNCSEYFPLFLAMLWV). Glutathione is bound by residues 51–55 (RAQVN) and 58–59 (EY). Residues 70–73 (AGIF) lie on the Cytoplasmic side of the membrane. A helical transmembrane segment spans residues 74–94 (FHEGAAALCGLVYLFARLRYF). 93–97 (YFQGY) is a glutathione binding site. The Lumenal portion of the chain corresponds to 95–104 (QGYARSAQQR). The Proton acceptor role is filled by arginine 104. A helical transmembrane segment spans residues 105-124 (LAPLYASARALWLLVALAAL). The Cytoplasmic segment spans residues 125–150 (GLLAHFLPAELRAALLGQLRKLLLRS).

Belongs to the MAPEG family. In terms of assembly, homotrimer. Interacts with ALOX5AP and ALOX5. Post-translationally, phosphorylation at Ser-36 by RPS6KB1 inhibits the leukotriene-C4 synthase activity.

The protein localises to the nucleus outer membrane. It is found in the endoplasmic reticulum membrane. It localises to the nucleus membrane. The enzyme catalyses leukotriene C4 = leukotriene A4 + glutathione. It catalyses the reaction (13S,14S)-epoxy-(4Z,7Z,9E,11E,16Z,19Z)-docosahexaenoate + glutathione = (13R)-S-glutathionyl-(14S)-hydroxy-(4Z,7Z,9E,11E,16Z,19Z)-docosahexaenoate. The protein operates within lipid metabolism; leukotriene C4 biosynthesis. Its activity is regulated as follows. Inhibited by MK886. Its function is as follows. Catalyzes the conjugation of leukotriene A4 with reduced glutathione (GSH) to form leukotriene C4 with high specificity. Can also catalyze the transfer of a glutathionyl group from glutathione (GSH) to 13(S),14(S)-epoxy-docosahexaenoic acid to form maresin conjugate in tissue regeneration 1 (MCTR1), a bioactive lipid mediator that possess potent anti-inflammatory and proresolving actions. This is Leukotriene C4 synthase (LTC4S) from Bos taurus (Bovine).